The primary structure comprises 106 residues: SH3 domain-binding glutamic acid-rich-like protein 2 (106 aa).

Residues 61–67 (QGNPLPP) carry the SH3-binding motif.

This sequence belongs to the SH3BGR family.

The protein resides in the nucleus. This Xenopus tropicalis (Western clawed frog) protein is SH3 domain-binding glutamic acid-rich-like protein 2 (sh3bgrl2).